The sequence spans 469 residues: Glutamine synthetase (469 aa).

The 85-residue stretch at 13–97 (KEVRYVDLRF…LRCDIVEPAT (85 aa)) folds into the GS beta-grasp domain. Positions 105-469 (PRSIAKRAEA…PVEFDMYYSL (365 aa)) constitute a GS catalytic domain. The Mg(2+) site is built by Glu-130 and Glu-132. An ATP-binding site is contributed by Glu-208. Glu-213 and Glu-221 together coordinate Mg(2+). Residues 265–266 (NG) and Gly-266 each bind L-glutamate. A Mg(2+)-binding site is contributed by His-270. ATP-binding positions include 272 to 274 (HQS) and Ser-274. L-glutamate contacts are provided by Arg-322, Glu-328, and Arg-340. ATP contacts are provided by Arg-340, Arg-345, and Lys-353. Glu-358 provides a ligand contact to Mg(2+). Arg-360 lines the L-glutamate pocket. An O-AMP-tyrosine modification is found at Tyr-398.

It belongs to the glutamine synthetase family. Oligomer of 12 subunits arranged in the form of two hexameric ring. The cofactor is Mg(2+).

It is found in the cytoplasm. The enzyme catalyses L-glutamate + NH4(+) + ATP = L-glutamine + ADP + phosphate + H(+). With respect to regulation, the activity of this enzyme could be controlled by adenylation under conditions of abundant glutamine. In terms of biological role, catalyzes the ATP-dependent biosynthesis of glutamine from glutamate and ammonia. This chain is Glutamine synthetase, found in Methylococcus capsulatus (strain ATCC 33009 / NCIMB 11132 / Bath).